Here is a 114-residue protein sequence, read N- to C-terminus: T cell receptor beta variable 6-9 (114 aa).

A signal peptide spans 1 to 21 (MSIGLLCCVAFSLLWAGPVNA). Residues 22 to 114 (GVTQTPKFHI…TSVYFCASSY (93 aa)) form the Ig-like domain. A disulfide bridge connects residues Cys-42 and Cys-110. Asn-84 is a glycosylation site (N-linked (GlcNAc...) asparagine).

As to quaternary structure, alpha-beta TR is a heterodimer composed of an alpha and beta chain; disulfide-linked. The alpha-beta TR is associated with the transmembrane signaling CD3 coreceptor proteins to form the TR-CD3 (TcR or TCR). The assembly of alpha-beta TR heterodimers with CD3 occurs in the endoplasmic reticulum where a single alpha-beta TR heterodimer associates with one CD3D-CD3E heterodimer, one CD3G-CD3E heterodimer and one CD247 homodimer forming a stable octameric structure. CD3D-CD3E and CD3G-CD3E heterodimers preferentially associate with TR alpha and TR beta chains, respectively. The association of the CD247 homodimer is the last step of TcR assembly in the endoplasmic reticulum and is required for transport to the cell surface.

Its subcellular location is the cell membrane. Its function is as follows. V region of the variable domain of T cell receptor (TR) beta chain that participates in the antigen recognition. Alpha-beta T cell receptors are antigen specific receptors which are essential to the immune response and are present on the cell surface of T lymphocytes. Recognize peptide-major histocompatibility (MH) (pMH) complexes that are displayed by antigen presenting cells (APC), a prerequisite for efficient T cell adaptive immunity against pathogens. Binding of alpha-beta TR to pMH complex initiates TR-CD3 clustering on the cell surface and intracellular activation of LCK that phosphorylates the ITAM motifs of CD3G, CD3D, CD3E and CD247 enabling the recruitment of ZAP70. In turn ZAP70 phosphorylates LAT, which recruits numerous signaling molecules to form the LAT signalosome. The LAT signalosome propagates signal branching to three major signaling pathways, the calcium, the mitogen-activated protein kinase (MAPK) kinase and the nuclear factor NF-kappa-B (NF-kB) pathways, leading to the mobilization of transcription factors that are critical for gene expression and essential for T cell growth and differentiation. The T cell repertoire is generated in the thymus, by V-(D)-J rearrangement. This repertoire is then shaped by intrathymic selection events to generate a peripheral T cell pool of self-MH restricted, non-autoaggressive T cells. Post-thymic interaction of alpha-beta TR with the pMH complexes shapes TR structural and functional avidity. This Homo sapiens (Human) protein is T cell receptor beta variable 6-9.